We begin with the raw amino-acid sequence, 341 residues long: Methionine import ATP-binding protein MetN 3 (341 aa).

One can recognise an ABC transporter domain in the interval Ile2–Ile241. ATP is bound at residue Gly38 to Ser45.

Belongs to the ABC transporter superfamily. Methionine importer (TC 3.A.1.24) family. In terms of assembly, the complex is composed of two ATP-binding proteins (MetN), two transmembrane proteins (MetI) and a solute-binding protein (MetQ).

It localises to the cell membrane. The catalysed reaction is L-methionine(out) + ATP + H2O = L-methionine(in) + ADP + phosphate + H(+). The enzyme catalyses D-methionine(out) + ATP + H2O = D-methionine(in) + ADP + phosphate + H(+). In terms of biological role, part of the ABC transporter complex MetNIQ involved in methionine import. Responsible for energy coupling to the transport system. This is Methionine import ATP-binding protein MetN 3 from Oceanobacillus iheyensis (strain DSM 14371 / CIP 107618 / JCM 11309 / KCTC 3954 / HTE831).